Reading from the N-terminus, the 86-residue chain is Small ribosomal subunit protein bS20 (86 aa).

Residues 1–22 (MANIKSAKKRAVQSEKRRKHNA) show a composition bias toward basic residues. Positions 1–28 (MANIKSAKKRAVQSEKRRKHNASGRSMM) are disordered.

The protein belongs to the bacterial ribosomal protein bS20 family.

Its function is as follows. Binds directly to 16S ribosomal RNA. In Serratia proteamaculans (strain 568), this protein is Small ribosomal subunit protein bS20.